The following is a 130-amino-acid chain: Flagellar assembly factor FliW (130 aa).

Belongs to the FliW family. Interacts with translational regulator CsrA and flagellin(s).

It is found in the cytoplasm. Its function is as follows. Acts as an anti-CsrA protein, binds CsrA and prevents it from repressing translation of its target genes, one of which is flagellin. Binds to flagellin and participates in the assembly of the flagellum. In Borrelia turicatae (strain 91E135), this protein is Flagellar assembly factor FliW.